The primary structure comprises 401 residues: Subtilisin-like protease 10 (401 aa).

Residues 1 to 19 (MLFLKAVIAILSVLPAADA) form the signal peptide. Residues 20-116 (AAILNFENKQ…IEPDRMASAQ (97 aa)) constitute a propeptide that is removed on maturation. Residues 35–112 (SYIVVLKNDI…QVDYIEPDRM (78 aa)) form the Inhibitor I9 domain. The Peptidase S8 domain occupies 126–401 (SWGLGRISHQ…NRLLYNGSGQ (276 aa)). Catalysis depends on charge relay system residues D158 and H189. A glycan (N-linked (GlcNAc...) asparagine) is linked at N250. S347 acts as the Charge relay system in catalysis. N397 carries an N-linked (GlcNAc...) asparagine glycan.

The protein belongs to the peptidase S8 family.

The protein localises to the secreted. Secreted subtilisin-like serine protease with keratinolytic activity that contributes to pathogenicity. This is Subtilisin-like protease 10 (SUB10) from Arthroderma otae (strain ATCC MYA-4605 / CBS 113480) (Microsporum canis).